The following is a 328-amino-acid chain: ABC transporter I family member 20 (328 aa).

The ABC transporter domain maps to 14–257; sequence VEISGLRFTY…SKKSLMRTVE (244 aa). Position 55-62 (55-62) interacts with ATP; it reads GSNGAGKT. The disordered stretch occupies residues 263 to 295; it reads ERDEERKRRKERKANGLPEFETRTEESRVTGDP. Residues 282–291 show a composition bias toward basic and acidic residues; that stretch reads FETRTEESRV.

This sequence belongs to the ABC transporter superfamily. ABCI family.

The protein localises to the cytoplasm. This is ABC transporter I family member 20 (ABCI20) from Arabidopsis thaliana (Mouse-ear cress).